Consider the following 114-residue polypeptide: DNA-binding protein Mbur_0117 (114 aa).

Residues 14-37 (ELQQQQSSPQNDAQAAYQQEQAQA) are disordered. The span at 16–35 (QQQQSSPQNDAQAAYQQEQA) shows a compositional bias: low complexity.

This sequence belongs to the PDCD5 family.

This chain is DNA-binding protein Mbur_0117, found in Methanococcoides burtonii (strain DSM 6242 / NBRC 107633 / OCM 468 / ACE-M).